A 647-amino-acid chain; its full sequence is MQRREFFQHFLKRAGIGAGALGAATAGLVGYYQPRKEVFDTSGKNNDELAEKLTTPKKAVVIGGGLAGISSALELARRNFEVTLVEASPSLGGKLTGWSIEALGEQFPVEHGFHGFFDQYYNLNEMFASAGIGSDMFTASPGYPVIFSDRQVEVFGQTPKWFPFNILSVVQQSKRLDIMSFLKDYPGLWPVISMFRYQYDRTFRDWDSIDFMTYCRRGEVLPAFIDTVLHPFSDATMNRMEVLSAAEAMRYFHFYFMGSPEGLAFRIITKDCMSALIEPLERKMTSLGVRVLKGRKAQNLVMQDGRVTAVRLDGAGAANGEVASIPKREVPVTGWLQHMSDAGIPVLVARRGASWVALDGRCTHMGCPVAPEVSTGGFHCPCHDGRFNAEGLPVSGPPKAPLPRLDVREAGEMLVIGQASSSSSPVVVTAEELPCDYCVVASGVRGTRELIALTRPGNSGFAGQVAALGEADPYVVWRVWLDRPLPSADFPFYTVSGYTYTDSITFYSSFQQPFIDWAKRTGGCVVELHAYAVAPQDVRPEPEIRATMLQELHAMFPESKNATIRHEIFMMQSNFTRWAPGDHAKRPGVETPYANLFLAGDWVSTKAPVFLMEAAVFTGRMAANAISAKESLRQKPLPIVPMNGIFA.

Residues A67, E86–A87, K94, and Y120 contribute to the FAD site. The region spanning V322–I416 is the Rieske domain. C362, H364, C380, and H383 together coordinate [2Fe-2S] cluster. Residues D601 and M612 each contribute to the FAD site.

This sequence belongs to the carotenoid/retinoid oxidoreductase family. It depends on FAD as a cofactor. The cofactor is [2Fe-2S] cluster.

It catalyses the reaction a carotenoid beta-end derivative + 2 A = a carotenoid phi-end derivative + 2 AH2. The protein operates within carotenoid biosynthesis. Its function is as follows. Involved in the biosynthesis of chlorobactene, a carotenoid with aromatic end group. Catalyzes the introduction of two additional double bonds into the ionone ring of gamma-carotene to produce chlorobactene. The reaction includes an intramolecular methyl transfer from position C1 to position C2 of the ring. The chain is Carotenoid phi-ring synthase from Chlorobaculum tepidum (strain ATCC 49652 / DSM 12025 / NBRC 103806 / TLS) (Chlorobium tepidum).